A 339-amino-acid chain; its full sequence is Ketol-acid reductoisomerase (NADP(+)) (339 aa).

The region spanning 1–182 (MRVYYDSDAD…GGGRAGIIET (182 aa)) is the KARI N-terminal Rossmann domain. NADP(+) contacts are provided by residues 24-27 (YGSQ), Arg48, Ser51, and 83-86 (DEGQ). The active site involves His108. An NADP(+)-binding site is contributed by Gly134. In terms of domain architecture, KARI C-terminal knotted spans 183–328 (TFKEECETDL…EKLRAMMPWI (146 aa)). 4 residues coordinate Mg(2+): Asp191, Glu195, Glu227, and Glu231. Substrate is bound at residue Ser252.

Belongs to the ketol-acid reductoisomerase family. Mg(2+) is required as a cofactor.

The enzyme catalyses (2R)-2,3-dihydroxy-3-methylbutanoate + NADP(+) = (2S)-2-acetolactate + NADPH + H(+). It carries out the reaction (2R,3R)-2,3-dihydroxy-3-methylpentanoate + NADP(+) = (S)-2-ethyl-2-hydroxy-3-oxobutanoate + NADPH + H(+). It participates in amino-acid biosynthesis; L-isoleucine biosynthesis; L-isoleucine from 2-oxobutanoate: step 2/4. Its pathway is amino-acid biosynthesis; L-valine biosynthesis; L-valine from pyruvate: step 2/4. Functionally, involved in the biosynthesis of branched-chain amino acids (BCAA). Catalyzes an alkyl-migration followed by a ketol-acid reduction of (S)-2-acetolactate (S2AL) to yield (R)-2,3-dihydroxy-isovalerate. In the isomerase reaction, S2AL is rearranged via a Mg-dependent methyl migration to produce 3-hydroxy-3-methyl-2-ketobutyrate (HMKB). In the reductase reaction, this 2-ketoacid undergoes a metal-dependent reduction by NADPH to yield (R)-2,3-dihydroxy-isovalerate. The chain is Ketol-acid reductoisomerase (NADP(+)) from Acidiphilium cryptum (strain JF-5).